The sequence spans 173 residues: Crossover junction endodeoxyribonuclease RuvC (173 aa).

Catalysis depends on residues Asp8, Glu67, and Asp139. 3 residues coordinate Mg(2+): Asp8, Glu67, and Asp139.

Belongs to the RuvC family. As to quaternary structure, homodimer which binds Holliday junction (HJ) DNA. The HJ becomes 2-fold symmetrical on binding to RuvC with unstacked arms; it has a different conformation from HJ DNA in complex with RuvA. In the full resolvosome a probable DNA-RuvA(4)-RuvB(12)-RuvC(2) complex forms which resolves the HJ. Mg(2+) is required as a cofactor.

The protein localises to the cytoplasm. It carries out the reaction Endonucleolytic cleavage at a junction such as a reciprocal single-stranded crossover between two homologous DNA duplexes (Holliday junction).. In terms of biological role, the RuvA-RuvB-RuvC complex processes Holliday junction (HJ) DNA during genetic recombination and DNA repair. Endonuclease that resolves HJ intermediates. Cleaves cruciform DNA by making single-stranded nicks across the HJ at symmetrical positions within the homologous arms, yielding a 5'-phosphate and a 3'-hydroxyl group; requires a central core of homology in the junction. The consensus cleavage sequence is 5'-(A/T)TT(C/G)-3'. Cleavage occurs on the 3'-side of the TT dinucleotide at the point of strand exchange. HJ branch migration catalyzed by RuvA-RuvB allows RuvC to scan DNA until it finds its consensus sequence, where it cleaves and resolves the cruciform DNA. The chain is Crossover junction endodeoxyribonuclease RuvC from Yersinia pseudotuberculosis serotype O:1b (strain IP 31758).